The following is a 196-amino-acid chain: ATP-dependent Clp protease proteolytic subunit 1 (196 aa).

Residue Ser-96 is the Nucleophile of the active site. His-121 is a catalytic residue.

This sequence belongs to the peptidase S14 family. Fourteen ClpP subunits assemble into 2 heptameric rings which stack back to back to give a disk-like structure with a central cavity, resembling the structure of eukaryotic proteasomes.

The protein resides in the cytoplasm. It carries out the reaction Hydrolysis of proteins to small peptides in the presence of ATP and magnesium. alpha-casein is the usual test substrate. In the absence of ATP, only oligopeptides shorter than five residues are hydrolyzed (such as succinyl-Leu-Tyr-|-NHMec, and Leu-Tyr-Leu-|-Tyr-Trp, in which cleavage of the -Tyr-|-Leu- and -Tyr-|-Trp bonds also occurs).. Its function is as follows. Cleaves peptides in various proteins in a process that requires ATP hydrolysis. Has a chymotrypsin-like activity. Plays a major role in the degradation of misfolded proteins. This is ATP-dependent Clp protease proteolytic subunit 1 from Prochlorococcus marinus (strain SARG / CCMP1375 / SS120).